The chain runs to 228 residues: Sensory transduction protein RegX3 (228 aa).

Residues 3–116 (SVLIVEDEES…ELIARIRAVL (114 aa)) form the Response regulatory domain. Residue Asp-52 is modified to 4-aspartylphosphate. The segment at residues 129–228 (DGVLEAGPVR…VRGLGYKLEG (100 aa)) is a DNA-binding region (ompR/PhoB-type).

Phosphorylated by SenX3.

In terms of biological role, member of the two-component regulatory system SenX3/RegX3 involved in stress response. The system is involved in phosphate starvation response. Once phosphorylated by SenX3, activates the expression of the alkaline phosphatase phoA, the high-affinity phosphate transporter pstSCAB, phnDCE, phnF and senX3. May act as a negative regulator of NhaA. Acts by binding to a DNA motif consisting of an inverted repeat. The sequence is that of Sensory transduction protein RegX3 from Mycolicibacterium smegmatis (strain ATCC 700084 / mc(2)155) (Mycobacterium smegmatis).